The primary structure comprises 280 residues: Fasciclin-like arabinogalactan protein 3 (280 aa).

A signal peptide spans M1–A24. In terms of domain architecture, FAS1 spans V25 to I169. N-linked (GlcNAc...) asparagine glycosylation is found at N26, N126, and N159. Pro residues predominate over residues V180 to S193. The tract at residues V180–G262 is disordered. Over residues A219 to P234 the composition is skewed to low complexity. S256 is lipidated: GPI-anchor amidated serine. The propeptide at S257–F280 is removed in mature form.

The protein belongs to the fasciclin-like AGP family.

It is found in the cell membrane. Functionally, may be a cell surface adhesion protein. This chain is Fasciclin-like arabinogalactan protein 3 (FLA3), found in Arabidopsis thaliana (Mouse-ear cress).